Consider the following 78-residue polypeptide: D-alanyl carrier protein (78 aa).

A Carrier domain is found at 1–78; it reads MAFRENVLEI…MIITQLEALK (78 aa). Serine 36 is subject to O-(pantetheine 4'-phosphoryl)serine.

It belongs to the DltC family. In terms of processing, 4'-phosphopantetheine is transferred from CoA to a specific serine of apo-DCP.

The protein localises to the cytoplasm. The protein operates within cell wall biogenesis; lipoteichoic acid biosynthesis. In terms of biological role, carrier protein involved in the D-alanylation of lipoteichoic acid (LTA). The loading of thioester-linked D-alanine onto DltC is catalyzed by D-alanine--D-alanyl carrier protein ligase DltA. The DltC-carried D-alanyl group is further transferred to cell membrane phosphatidylglycerol (PG) by forming an ester bond, probably catalyzed by DltD. D-alanylation of LTA plays an important role in modulating the properties of the cell wall in Gram-positive bacteria, influencing the net charge of the cell wall. This is D-alanyl carrier protein from Listeria monocytogenes serotype 4a (strain HCC23).